A 393-amino-acid chain; its full sequence is Lysophosphatidic acid receptor 1 (393 aa).

The Extracellular segment spans residues 1–50 (MAAASTSSPVVSQPQFTAMNEPQCFYNESIAFFYNRSGKYLATEWNTVSK). Intrachain disulfides connect cysteine 24–cysteine 190 and cysteine 188–cysteine 195. N-linked (GlcNAc...) asparagine glycosylation is found at asparagine 27 and asparagine 35. Position 39 (lysine 39) interacts with a 1-acyl-sn-glycero-3-phosphate. The chain crosses the membrane as a helical span at residues 51–75 (LVMGLGITVCIFIMLANLLVMVAIY). Residues 76 to 83 (VNRRFHFP) are Cytoplasmic-facing. Residues 84–107 (IYYLMANLAAADFFAGLAYFYLMF) traverse the membrane as a helical segment. Over 108–121 (NTGPNTRRLTVSTW) the chain is Extracellular. A helical transmembrane segment spans residues 122-144 (LLRQGLIDTTVTASVANLLAIAI). 124–129 (RQGLID) contributes to the a 1-acyl-sn-glycero-3-phosphate binding site. Over 145-163 (ERHITVFRMQLHTRMSNRR) the chain is Cytoplasmic. A helical transmembrane segment spans residues 164–184 (VVVVIVVIWTMAIVMGAIPSV). The Extracellular portion of the chain corresponds to 185–204 (GWNCICDIENCSNMAPLYSD). Residues 205–225 (SYLVFWAIFNLVTFVVMVVLY) traverse the membrane as a helical segment. A 1-acyl-sn-glycero-3-phosphate is bound at residue tryptophan 210. Topologically, residues 226 to 255 (AHIFGYVRQRTMRMSRHSSGPRRNRDTMMS) are cytoplasmic. The chain crosses the membrane as a helical span at residues 256 to 280 (LLKTVVIVLGAFIICWTPGLVLLLL). Topologically, residues 281–294 (DVCCPQCDVLAYEK) are extracellular. A disulfide bond links cysteine 284 and cysteine 287. The helical transmembrane segment at 295–315 (FFLLLAEFNSAMNPIIYSYRD) threads the bilayer. The Cytoplasmic portion of the chain corresponds to 316 to 393 (KEMSATFRQI…PPERPGQGRV (78 aa)). Serine 341 carries the post-translational modification Phosphoserine. At threonine 351 the chain carries Phosphothreonine. A compositionally biased stretch (basic and acidic residues) spans 369–381 (KMRGGHHLLRDEQ). Residues 369–393 (KMRGGHHLLRDEQPPPPERPGQGRV) are disordered.

Belongs to the G-protein coupled receptor 1 family. As to quaternary structure, interacts with RALA and GRK2. Interacts with GNAQ and GNA13. Interacts with CD14; the interaction is enhanced by exposure to bacterial lipopolysaccharide (LPS). N-glycosylated. As to expression, detected in brain cortex and in pituitary pars tuberalis.

The protein resides in the cell surface. It localises to the cell membrane. It is found in the endosome. Its function is as follows. Receptor for lysophosphatidic acid (LPA). Plays a role in the reorganization of the actin cytoskeleton, cell migration, differentiation and proliferation, and thereby contributes to the responses to tissue damage and infectious agents. Activates downstream signaling cascades via the G(i)/G(o), G(12)/G(13), and G(q) families of heteromeric G proteins. Signaling inhibits adenylyl cyclase activity and decreases cellular cAMP levels. Signaling triggers an increase of cytoplasmic Ca(2+) levels. Activates RALA; this leads to the activation of phospholipase C (PLC) and the formation of inositol 1,4,5-trisphosphate. Signaling mediates activation of down-stream MAP kinases. Contributes to the regulation of cell shape. Promotes Rho-dependent reorganization of the actin cytoskeleton in neuronal cells and neurite retraction. Promotes the activation of Rho and the formation of actin stress fibers. Promotes formation of lamellipodia at the leading edge of migrating cells via activation of RAC1. Through its function as LPA receptor, plays a role in chemotaxis and cell migration, including responses to injury and wounding. Plays a role in triggering inflammation in response to bacterial lipopolysaccharide (LPS) via its interaction with CD14. Promotes cell proliferation in response to LPA. Inhibits the intracellular ciliogenesis pathway in response to LPA and through AKT1 activation. Required for normal skeleton development. May play a role in osteoblast differentiation. Required for normal brain development. Required for normal proliferation, survival and maturation of newly formed neurons in the adult dentate gyrus. Plays a role in pain perception and in the initiation of neuropathic pain. This chain is Lysophosphatidic acid receptor 1 (LPAR1), found in Ovis aries (Sheep).